We begin with the raw amino-acid sequence, 146 residues long: Meiotically up-regulated gene 151 protein (146 aa).

A disordered region spans residues 1–40 (MSLVAYDSEEEEQTSLVNENNDIKGRSEEPHWKIPNSPKA). Over residues 21-32 (NDIKGRSEEPHW) the composition is skewed to basic and acidic residues.

The protein resides in the nucleus. Has a role in meiosis. The protein is Meiotically up-regulated gene 151 protein (mug151) of Schizosaccharomyces pombe (strain 972 / ATCC 24843) (Fission yeast).